The chain runs to 458 residues: Enolase (458 aa).

(2R)-2-phosphoglycerate is bound at residue glutamine 177. The active-site Proton donor is glutamate 219. Mg(2+) is bound by residues aspartate 256, glutamate 310, and aspartate 337. Positions 362, 391, 392, and 413 each coordinate (2R)-2-phosphoglycerate. Lysine 362 acts as the Proton acceptor in catalysis.

It belongs to the enolase family. Mg(2+) is required as a cofactor.

The protein localises to the cytoplasm. It is found in the secreted. The protein resides in the cell surface. The enzyme catalyses (2R)-2-phosphoglycerate = phosphoenolpyruvate + H2O. Its pathway is carbohydrate degradation; glycolysis; pyruvate from D-glyceraldehyde 3-phosphate: step 4/5. Its function is as follows. Catalyzes the reversible conversion of 2-phosphoglycerate (2-PG) into phosphoenolpyruvate (PEP). It is essential for the degradation of carbohydrates via glycolysis. This is Enolase from Mycoplasma genitalium (strain ATCC 33530 / DSM 19775 / NCTC 10195 / G37) (Mycoplasmoides genitalium).